The following is a 526-amino-acid chain: GMP synthase [glutamine-hydrolyzing] (526 aa).

Residues 9 to 208 enclose the Glutamine amidotransferase type-1 domain; sequence RILILDFGSQ…LVNICGCKQL (200 aa). Cysteine 86 functions as the Nucleophile in the catalytic mechanism. Active-site residues include histidine 182 and glutamate 184. Positions 209 to 401 constitute a GMPS ATP-PPase domain; sequence WTPGRIIEDA…LGLPYDMVYR (193 aa). Residue 236–242 coordinates ATP; the sequence is SGGVDSS.

In terms of assembly, homodimer.

The catalysed reaction is XMP + L-glutamine + ATP + H2O = GMP + L-glutamate + AMP + diphosphate + 2 H(+). It functions in the pathway purine metabolism; GMP biosynthesis; GMP from XMP (L-Gln route): step 1/1. In terms of biological role, catalyzes the synthesis of GMP from XMP. This is GMP synthase [glutamine-hydrolyzing] from Hahella chejuensis (strain KCTC 2396).